A 231-amino-acid polypeptide reads, in one-letter code: Thiamine import ATP-binding protein ThiQ (231 aa).

Residues leucine 2–glycine 230 form the ABC transporter domain. Glycine 32–serine 39 is an ATP binding site.

The protein belongs to the ABC transporter superfamily. Thiamine importer (TC 3.A.1.19.1) family. In terms of assembly, the complex is composed of two ATP-binding proteins (ThiQ), two transmembrane proteins (ThiP) and a solute-binding protein (ThiB).

Its subcellular location is the cell inner membrane. It catalyses the reaction thiamine(out) + ATP + H2O = thiamine(in) + ADP + phosphate + H(+). In terms of biological role, part of the ABC transporter complex ThiBPQ involved in thiamine import. Responsible for energy coupling to the transport system. This Ruegeria sp. (strain TM1040) (Silicibacter sp.) protein is Thiamine import ATP-binding protein ThiQ.